The sequence spans 425 residues: MNSIWKQYIDILQGVVKPALGCTEPICAAYAASVATQMLGSKPETIDVFVSDNLYKNSMGVFVPRTGRVGLAIAAATGAIGGNPDAGLEVLAKITEEEVDEAQKLIDNGCVVVQRETTDEFIYCRVIAKNAVHNAEVTISGGHTLIIEKRLDDNVIFTLDSSLPKTSTASICDGVDITISSIYDFATQAEFDDIKFILEAKELNIALAQEGLNNPYGLEVGRTYQKNIEKGLLAKSLDSDILIYTSAASDARMGGATLPAMSNYGSGNQGIAATIPVVKMADFFNADDEKLARAFIMSHLGAIYIKSHYPPLSAFCGNAVTSAAASMAMVYLAGGTFEQSCSAIQNTISDTSGMICDGAKSTCAMKVGSSAQSAMKSALLALNDHCVTKQGVIADDVEKTIKNIGRMITTGMPNIDHEIIEIMAS.

It belongs to the UPF0597 family.

The polypeptide is UPF0597 protein VF_0641 (Aliivibrio fischeri (strain ATCC 700601 / ES114) (Vibrio fischeri)).